The following is a 493-amino-acid chain: MTDLTSLTIAEARAKLSDKEITAVELTDAYLAAIEAANETINAYIAVTPDKAREMAKASDARIGAGKAGALEGIPLGIKDLFGTQGLHTQACSHILDGFRPHYESTVTQNLWNDGAVMLGKLNMDEFAMGSSNETSYYGPVKNPWRAKESNLDLVPGGSSGGSAAAVAARLCAGATATDTGGSIRQPAAFTGTVGIKPTYGRCSRWGVIAFASSLDQAGPIARDVRDAAILLKSMASVDPKDTTSVDLPVPDYEAAIGQSIKGMRIGIPKEYRVEGMPEEIEALWQQGVAWLKDAGAEIVDISLPHTKYALPAYYIVAPAEASSNLARYDGVRYGLRVDGKDIVDMYEKTRAAGFGQEVKRRIMIGTYVLSAGYYDAYYLRAQKVRTLIKRDFELAFHAGVDAILTPATPSSAFGIADEDLASDPVKMYLNDIFTVTVNMAGLPGIAVPGGLDHKGLPLGLQLIGKPFDEETLFKTAHVIEQAAGRFTPSKWW.

Residues lysine 79 and serine 159 each act as charge relay system in the active site. Catalysis depends on serine 183, which acts as the Acyl-ester intermediate.

Belongs to the amidase family. GatA subfamily. As to quaternary structure, heterotrimer of A, B and C subunits.

It catalyses the reaction L-glutamyl-tRNA(Gln) + L-glutamine + ATP + H2O = L-glutaminyl-tRNA(Gln) + L-glutamate + ADP + phosphate + H(+). Allows the formation of correctly charged Gln-tRNA(Gln) through the transamidation of misacylated Glu-tRNA(Gln) in organisms which lack glutaminyl-tRNA synthetase. The reaction takes place in the presence of glutamine and ATP through an activated gamma-phospho-Glu-tRNA(Gln). In Sinorhizobium medicae (strain WSM419) (Ensifer medicae), this protein is Glutamyl-tRNA(Gln) amidotransferase subunit A.